The sequence spans 452 residues: Plasmepsin I (452 aa).

The Cytoplasmic segment spans residues 1-37; the sequence is MALSIKEDFSSAFAKNESAVNSSTFNNNMKTWKIQKR. A propeptide spanning residues 1-123 is cleaved from the precursor; that stretch reads MALSIKEDFS…TGLTQKPHLG (123 aa). Residues 38–58 form a helical; Signal-anchor for type II membrane protein membrane-spanning segment; that stretch reads FQILYVFFFLLITGALFYYLI. The Lumenal segment spans residues 59-452; sequence DNVLFPKNKK…VGFALAKKKL (394 aa). Residues 139-446 form the Peptidase A1 domain; the sequence is YYGEAQIGDN…DYDNHTVGFA (308 aa). Asp-157 is a catalytic residue. A disulfide bond links Cys-170 and Cys-175. Asp-337 is an active-site residue. Residues Cys-372 and Cys-408 are joined by a disulfide bond.

Belongs to the peptidase A1 family. In terms of processing, not N-glycosylated. Proteolytically cleaved into the soluble active mature form in the digestive vacuole by cysteine protease falcipains; the process begins at the early ring stage. Proteolysis requires an acidic environment.

The protein localises to the membrane. Its subcellular location is the vacuole lumen. It is found in the vacuole membrane. The catalysed reaction is Hydrolysis of the 33-Phe-|-Leu-34 bond in the alpha-chain of hemoglobin, leading to denaturation of molecule.. With respect to regulation, inhibited by KNI derived compounds KNI-10333 and to a lesser extent KNI-10743. Functionally, during the asexual blood stage, catalyzes the initial cleavage of native host hemoglobin (Hb) resulting in Hb denaturation; specifically cleaves between Phe-33 and Leu-34 of Hb alpha-chain. Digestion of host Hb is an essential step which provides the parasite with amino acids for protein synthesis, and regulates osmolarity. The chain is Plasmepsin I from Plasmodium falciparum (isolate 3D7).